The chain runs to 413 residues: NADH-quinone oxidoreductase subunit D (413 aa).

It belongs to the complex I 49 kDa subunit family. NDH-1 is composed of 14 different subunits. Subunits NuoB, C, D, E, F, and G constitute the peripheral sector of the complex.

The protein resides in the cell inner membrane. The catalysed reaction is a quinone + NADH + 5 H(+)(in) = a quinol + NAD(+) + 4 H(+)(out). NDH-1 shuttles electrons from NADH, via FMN and iron-sulfur (Fe-S) centers, to quinones in the respiratory chain. The immediate electron acceptor for the enzyme in this species is believed to be ubiquinone. Couples the redox reaction to proton translocation (for every two electrons transferred, four hydrogen ions are translocated across the cytoplasmic membrane), and thus conserves the redox energy in a proton gradient. In Rhodobacter capsulatus (Rhodopseudomonas capsulata), this protein is NADH-quinone oxidoreductase subunit D.